A 404-amino-acid chain; its full sequence is Formate-dependent phosphoribosylglycinamide formyltransferase (404 aa).

N(1)-(5-phospho-beta-D-ribosyl)glycinamide contacts are provided by residues 25–26 and glutamate 85; that span reads EL. ATP-binding positions include arginine 118, lysine 159, 164–169, 199–202, and glutamate 207; these read SSGKGQ and EGFI. In terms of domain architecture, ATP-grasp spans 123–318; the sequence is RLAAEELGLP…EFELHARAIL (196 aa). Mg(2+) is bound by residues glutamate 277 and glutamate 289. N(1)-(5-phospho-beta-D-ribosyl)glycinamide-binding positions include aspartate 296, lysine 365, and 372 to 373; that span reads RR.

This sequence belongs to the PurK/PurT family. In terms of assembly, homodimer.

The enzyme catalyses N(1)-(5-phospho-beta-D-ribosyl)glycinamide + formate + ATP = N(2)-formyl-N(1)-(5-phospho-beta-D-ribosyl)glycinamide + ADP + phosphate + H(+). It functions in the pathway purine metabolism; IMP biosynthesis via de novo pathway; N(2)-formyl-N(1)-(5-phospho-D-ribosyl)glycinamide from N(1)-(5-phospho-D-ribosyl)glycinamide (formate route): step 1/1. Its function is as follows. Involved in the de novo purine biosynthesis. Catalyzes the transfer of formate to 5-phospho-ribosyl-glycinamide (GAR), producing 5-phospho-ribosyl-N-formylglycinamide (FGAR). Formate is provided by PurU via hydrolysis of 10-formyl-tetrahydrofolate. This is Formate-dependent phosphoribosylglycinamide formyltransferase from Burkholderia pseudomallei (strain 1106a).